Reading from the N-terminus, the 460-residue chain is MDNIPNLTILEHSRISPPPSTIGHRSLPLTFFDIAWLLFPPVHHLYFYHFPYSKSHFTETVIPNLKHSLSITLQHYFPFVGKLIVYPNPHDSTRKPEIRHVEGDSVALTFAETTLDFNDLSANHPRKCENFYPLVPPLGNAVKESDYVTLPVFSVQVTYFPNSGISIGLTNHHSLSDANTRFGFLKAWASVCETGEDQPFLKNGSPPVFDRVVVNPQLYENRLNQTRLGTFYQAPSLVGSSSDRVRATFVLARTHISGLKKQVLTQLPMLEYTSSFTVTCGYIWSCIVKSLVNMGEKKGEDELEQFIVSVGCRSRLDPPLPENYFGNCSAPCIVTIKNGVLKGENGFVMAAKLIGEGISKMVNKKGGILEYADRWYDGFKIPARKMGISGTPKLNFYDIDFGWGKAMKYEVVSIDYSASVSLSACKESAQDFEIGVCFPSMQMEAFGKIFNDGLESAIAS.

Residues histidine 173 and aspartate 400 each act as proton acceptor in the active site.

This sequence belongs to the plant acyltransferase family.

It catalyses the reaction an anthocyanidin 3-O-beta-D-glucoside + malonyl-CoA = an anthocyanidin 3-O-(6-O-malonyl-beta-D-glucoside) + CoA. Completely inhibited by 5 mM N-ethylmaleimide or 0.1 mM Cu(2+). Partially inhibited by 0.1 mM Fe(2+) or 0.1 mM Hg(2+). In terms of biological role, catalyzes the transfer of the malonyl group from malonyl-CoA to pelargonidin 3-O-glucoside to produce pelargonidin 3-O-6''-O-malonylglucoside. Can also transfer the malonyl group from malonyl-CoA to cyanidin 3-O-glucoside, delphinidin 3-O-glucoside and quercetin 3-O-glucoside. In Dahlia pinnata (Pinnate dahlia), this protein is Malonyl-coenzyme A:anthocyanin 3-O-glucoside-6''-O-malonyltransferase.